Consider the following 369-residue polypeptide: Protein disulfide-isomerase erp38 (369 aa).

Residues 1–18 (MVLLKSLVVASLAAAVAA) form the signal peptide. 2 Thioredoxin domains span residues 19 to 130 (KSAV…EKTG) and 131 to 251 (VKAR…EKAG). Catalysis depends on nucleophile residues C50, C53, C170, and C173. Intrachain disulfides connect C50-C53 and C170-C173. The Prevents secretion from ER motif lies at 366 to 369 (KEEL).

This sequence belongs to the protein disulfide isomerase family.

It localises to the endoplasmic reticulum lumen. The enzyme catalyses Catalyzes the rearrangement of -S-S- bonds in proteins.. The chain is Protein disulfide-isomerase erp38 (erp38) from Neurospora crassa (strain ATCC 24698 / 74-OR23-1A / CBS 708.71 / DSM 1257 / FGSC 987).